A 107-amino-acid polypeptide reads, in one-letter code: MPYLYLLLSIVSEVIGSAFLKSSDGFSKLYPTITTIISFLICFYFLSKTMQHLPLNITYASWAGLGLVLTTIVSVLIFKEQINLISIISIILIIFGVVLLNTFGSSH.

4 helical membrane passes run 1-21, 26-46, 57-77, and 84-104; these read MPYL…AFLK, FSKL…FYFL, ITYA…SVLI, and LISI…NTFG.

The protein belongs to the drug/metabolite transporter (DMT) superfamily. Small multidrug resistance (SMR) (TC 2.A.7.1) family.

Its subcellular location is the cell membrane. Its function is as follows. Multidrug exporter. Is implicated for the resistance to bacteriocidal quaternary ammonium compounds. The chain is Quaternary ammonium compound-resistance protein QacH (qacH) from Staphylococcus saprophyticus.